The chain runs to 416 residues: Cysteate synthase (416 aa).

At K104 the chain carries N6-(pyridoxal phosphate)lysine. N130 contributes to the pyridoxal 5'-phosphate binding site.

It belongs to the threonine synthase family. Cysteate synthase subfamily. Homotrimer. Pyridoxal 5'-phosphate serves as cofactor.

It carries out the reaction O-phospho-L-serine + sulfite + H(+) = L-cysteate + phosphate. It participates in cofactor biosynthesis; coenzyme M biosynthesis. In terms of biological role, specifically catalyzes the beta-elimination of phosphate from L-phosphoserine and the beta-addition of sulfite to the dehydroalanine intermediate to produce L-cysteate. This Methanosarcina barkeri (strain Fusaro / DSM 804) protein is Cysteate synthase.